The chain runs to 103 residues: Large ribosomal subunit protein uL24 (103 aa).

Belongs to the universal ribosomal protein uL24 family. Part of the 50S ribosomal subunit.

Its function is as follows. One of two assembly initiator proteins, it binds directly to the 5'-end of the 23S rRNA, where it nucleates assembly of the 50S subunit. One of the proteins that surrounds the polypeptide exit tunnel on the outside of the subunit. The sequence is that of Large ribosomal subunit protein uL24 from Corynebacterium urealyticum (strain ATCC 43042 / DSM 7109).